A 398-amino-acid polypeptide reads, in one-letter code: Tryptophan synthase beta chain (398 aa).

Lys-88 bears the N6-(pyridoxal phosphate)lysine mark.

Belongs to the TrpB family. As to quaternary structure, tetramer of two alpha and two beta chains. It depends on pyridoxal 5'-phosphate as a cofactor.

The catalysed reaction is (1S,2R)-1-C-(indol-3-yl)glycerol 3-phosphate + L-serine = D-glyceraldehyde 3-phosphate + L-tryptophan + H2O. The protein operates within amino-acid biosynthesis; L-tryptophan biosynthesis; L-tryptophan from chorismate: step 5/5. The beta subunit is responsible for the synthesis of L-tryptophan from indole and L-serine. This is Tryptophan synthase beta chain from Actinobacillus succinogenes (strain ATCC 55618 / DSM 22257 / CCUG 43843 / 130Z).